Consider the following 222-residue polypeptide: Bone marrow proteoglycan (222 aa).

The signal sequence occupies residues M1–A16. Residues L17–Q105 constitute a propeptide, acidic. Residue T23 is glycosylated (O-linked (GalNAc...) threonine; partial). An O-linked (GalNAc...) serine glycan is attached at S24. O-linked (GalNAc...) threonine glycosylation occurs at T25. Residues T25–E75 form a disordered region. Residue T34 is glycosylated (O-linked (GalNAc...) threonine; partial). A compositionally biased stretch (acidic residues) spans E37–W60. O-linked (Xyl...) (chondroitin sulfate) serine glycosylation occurs at S62. N86 carries N-linked (GlcNAc...) asparagine glycosylation. Residues C104–Y222 enclose the C-type lectin domain. 2 cysteine pairs are disulfide-bonded: C125/C220 and C197/C212.

In pregnancy serum, the proform exists as a disulfide-linked 2:2 heterotetramer with PAPPA, as a disulfide-linked 2:2 heterotetramer with AGT, and as a complex (probably a 2:2:2 heterohexamer) with AGT and C3dg. In terms of processing, nitrated. As to expression, detected in plasma and urine (at protein level). Detected in placenta (at protein level). High levels of the proform in placenta and pregnancy serum; in placenta, localized to X cells of septa and anchoring villi. Lower levels in a variety of other tissues including kidney, myometrium, endometrium, ovaries, breast, prostate, bone marrow and colon.

Its subcellular location is the secreted. It is found in the cytoplasmic vesicle. The protein resides in the secretory vesicle. In terms of biological role, cytotoxin and helminthotoxin. Also induces non-cytolytic histamine release from human basophils. Involved in antiparasitic defense mechanisms and immune hypersensitivity reactions. The proform acts as a proteinase inhibitor, reducing the activity of PAPPA. The protein is Bone marrow proteoglycan (PRG2) of Homo sapiens (Human).